The following is a 417-amino-acid chain: NADH-quinone oxidoreductase subunit D (417 aa).

This sequence belongs to the complex I 49 kDa subunit family. As to quaternary structure, NDH-1 is composed of 14 different subunits. Subunits NuoB, C, D, E, F, and G constitute the peripheral sector of the complex.

Its subcellular location is the cell membrane. It catalyses the reaction a quinone + NADH + 5 H(+)(in) = a quinol + NAD(+) + 4 H(+)(out). NDH-1 shuttles electrons from NADH, via FMN and iron-sulfur (Fe-S) centers, to quinones in the respiratory chain. The immediate electron acceptor for the enzyme in this species is believed to be ubiquinone. Couples the redox reaction to proton translocation (for every two electrons transferred, four hydrogen ions are translocated across the cytoplasmic membrane), and thus conserves the redox energy in a proton gradient. The sequence is that of NADH-quinone oxidoreductase subunit D from Polynucleobacter asymbioticus (strain DSM 18221 / CIP 109841 / QLW-P1DMWA-1) (Polynucleobacter necessarius subsp. asymbioticus).